Consider the following 148-residue polypeptide: Lysozyme-like protein 2 (148 aa).

The N-terminal stretch at 1-19 (MKAAGILTLIGCLVTGAES) is a signal peptide. Residues 20-148 (KIYTRCKLAK…SDWKKDCEVS (129 aa)) form the C-type lysozyme domain. Cystine bridges form between C25–C145, C49–C133, C83–C98, and C94–C112. Residue E54 is part of the active site. Residue N58 is glycosylated (N-linked (GlcNAc...) asparagine). D71 is a catalytic residue.

This sequence belongs to the glycosyl hydrolase 22 family. Monomer. In terms of tissue distribution, expressed in testis, epididymis and placenta.

It localises to the secreted. It carries out the reaction Hydrolysis of (1-&gt;4)-beta-linkages between N-acetylmuramic acid and N-acetyl-D-glucosamine residues in a peptidoglycan and between N-acetyl-D-glucosamine residues in chitodextrins.. The protein is Lysozyme-like protein 2 (LYZL2) of Homo sapiens (Human).